A 113-amino-acid polypeptide reads, in one-letter code: TYRO protein tyrosine kinase-binding protein (113 aa).

Positions M1–A27 are cleaved as a signal peptide. Residues Q28–P40 are Extracellular-facing. Residues G41–V61 form a helical membrane-spanning segment. Position 50 (D50) interacts with Ca(2+). At Y62 to K113 the chain is on the cytoplasmic side. The segment at A75 to K113 is disordered. Positions R80 to Q108 constitute an ITAM domain. Residues T87 to D100 are compositionally biased toward polar residues. Phosphotyrosine is present on residues Y91 and Y102.

This sequence belongs to the TYROBP family. Homodimer; disulfide-linked. Homotrimer; disulfide-linked. Homotetramer; disulfide-linked. Homotrimers and homotetramers form when low levels of partner receptors are available and is competitive with assembly with interacting receptors. They may represent alternative oligomerization states or may be intermediates in the receptor assembly process. Binding of a metal cation aids in homooligomerization through coordination of the metal ion by the subunits of the oligomer. Interacts with TREM1. Interacts with TREM2. Interacts with CLECSF5. Interacts with CD300LB and CD300C2. Interacts with CD300E. Interacts (via ITAM domain) with SYK (via SH2 domains); activates SYK mediating neutrophils and macrophages integrin-mediated activation. Interacts with KLRC2. Interacts with CD300H. Interacts with KLRD1. Interacts with SIGLEC1. Post-translationally, following ligand binding by associated receptors, tyrosine phosphorylated in the ITAM domain which leads to activation of additional tyrosine kinases and subsequent cell activation.

It is found in the cell membrane. Adapter protein which non-covalently associates with activating receptors found on the surface of a variety of immune cells to mediate signaling and cell activation following ligand binding by the receptors. TYROBP is tyrosine-phosphorylated in the ITAM domain following ligand binding by the associated receptors which leads to activation of additional tyrosine kinases and subsequent cell activation. Also has an inhibitory role in some cells. Non-covalently associates with activating receptors of the CD300 family to mediate cell activation. Also mediates cell activation through association with activating receptors of the CD200R family. Required for neutrophil activation mediated by integrin. Required for the activation of myeloid cells mediated by the CLEC5A/MDL1 receptor. Associates with natural killer (NK) cell receptors such as the KLRD1/KLRC2 heterodimer to mediate NK cell activation. Associates with TREM1 to mediate activation of neutrophils and monocytes. Associates with TREM2 on monocyte-derived dendritic cells to mediate up-regulation of chemokine receptor CCR7 and dendritic cell maturation and survival. Association with TREM2 mediates cytokine-induced formation of multinucleated giant cells which are formed by the fusion of macrophages. Stabilizes the TREM2 C-terminal fragment (TREM2-CTF) produced by TREM2 ectodomain shedding which suppresses the release of pro-inflammatory cytokines. In microglia, required with TREM2 for phagocytosis of apoptotic neurons. Required with ITGAM/CD11B in microglia to control production of microglial superoxide ions which promote the neuronal apoptosis that occurs during brain development. Promotes pro-inflammatory responses in microglia following nerve injury which accelerates degeneration of injured neurons. Positively regulates the expression of the IRAK3/IRAK-M kinase and IL10 production by liver dendritic cells and inhibits their T cell allosimulatory ability. Negatively regulates B cell proliferation. Required for CSF1-mediated osteoclast cytoskeletal organization. Positively regulates multinucleation during osteoclast development. This chain is TYRO protein tyrosine kinase-binding protein, found in Pan troglodytes (Chimpanzee).